The chain runs to 219 residues: Vacuolar iron transporter homolog 2.1 (219 aa).

The span at 1 to 15 (MTSNVQLSETNSPRN) shows a compositional bias: polar residues. Residues 1 to 26 (MTSNVQLSETNSPRNQKTRPRAEKEE) are disordered. Thr-2 is modified (N-acetylthreonine). The Cytoplasmic portion of the chain corresponds to 2–37 (TSNVQLSETNSPRNQKTRPRAEKEEVDYMQRAQWLR). A helical membrane pass occupies residues 38-58 (AALLGANDGLVTVASLMMGVG). At 59–67 (SIKEDVKAM) the chain is on the vacuolar side. The chain crosses the membrane as a helical span at residues 68 to 88 (LLVGFAGLVAGACSMAIGEFV). The Cytoplasmic portion of the chain corresponds to 89 to 133 (SVCTQRDIETAQMKRAIEHKTSLSAIDEQEEEEKKERLPNPGQAA). Residues 134 to 154 (IASALAFSVGAAMPLLGAVFI) form a helical membrane-spanning segment. Over 155 to 161 (ENHKVRM) the chain is Vacuolar. Residues 162–182 (VVVAVVATIALVVFGVTGAVL) form a helical membrane-spanning segment. Over 183 to 193 (GKTSVVKSSVR) the chain is Cytoplasmic. Residues 194 to 214 (VVIGGWMAMALTFGLTKFIGS) traverse the membrane as a helical segment. The Vacuolar segment spans residues 215–219 (AAMQI).

The protein belongs to the CCC1 family. As to expression, highly expressed in roots. inflorescences and at lower levels in leaves.

The protein resides in the vacuole membrane. It catalyses the reaction Fe(2+)(in) = Fe(2+)(out). Functionally, vacuolar iron transporter involved in the transfer of iron ions from the cytosol to the vacuole for intracellular iron storage. Involved in regulation of cellular iron homeostasis. Vacuolar iron storage is required for seed embryo and seedling development. The protein is Vacuolar iron transporter homolog 2.1 of Arabidopsis thaliana (Mouse-ear cress).